The following is a 555-amino-acid chain: MKIDLNTIFPSSCKEYIPGKIYKNIKIGMRKVSFNNDTESILIYDTGGPHSDQDIQTNINNGIKKLRVNWITDRQDVEYYDRHTINTNSSTAFPLQNNKALKSKNDKPVTQMFYAKNNIITPEMEYVAIRENSLIQKLLSHTPNTIIPEITPELVRQEVAAGRAIIPANINHPESEPMIIGKNFLVKINANIGNSAVSSDINNEVYKMIYAIIYGADTVMDLSTGSHIHNTREWIIRNSPVPIGTVPIYQALNKVNGIVGELNFNIFKETLIEQAEQGVDYFTIHAGVLKKYIQYTTNRLTGIVSRGGAIIAQWCSIHNKENFLYTNFEEICDIMKSYDIAFSLGDGLRPGSIADANDKAQFLELKTLGELTDIAWKHDCQVMIEGPGHVPMHLIKENVEKQMYFCKEAPFYTLGPLTTDIAPGYDHITSAIGAAMIGWYGTSMLCYVTPKEHLGLPNLNDVKNGVITYKIAAHAADLAKGNPSAYIRDYALSYARFNFRWYDQFNLSLDPETAKSFHDESLPSEHAKSAHFCSMCGPKFCSMKLTHQLQLNSTE.

Substrate contacts are provided by residues Asn-191, Met-220, Tyr-249, His-285, 305–307, 346–349, and Glu-385; these read SRG and DGLR. Position 389 (His-389) interacts with Zn(2+). Tyr-412 is a binding site for substrate. His-453 contacts Zn(2+). [4Fe-4S] cluster-binding residues include Cys-533, Cys-536, and Cys-541.

It belongs to the ThiC family. Homodimer. It depends on [4Fe-4S] cluster as a cofactor.

The enzyme catalyses 5-amino-1-(5-phospho-beta-D-ribosyl)imidazole + S-adenosyl-L-methionine = 4-amino-2-methyl-5-(phosphooxymethyl)pyrimidine + CO + 5'-deoxyadenosine + formate + L-methionine + 3 H(+). The protein operates within cofactor biosynthesis; thiamine diphosphate biosynthesis. Functionally, catalyzes the synthesis of the hydroxymethylpyrimidine phosphate (HMP-P) moiety of thiamine from aminoimidazole ribotide (AIR) in a radical S-adenosyl-L-methionine (SAM)-dependent reaction. The polypeptide is Phosphomethylpyrimidine synthase (Ehrlichia ruminantium (strain Gardel)).